A 194-amino-acid polypeptide reads, in one-letter code: MELLSTIRIFSSPNMKDLLIQLSQGKVIIYPTESVFGLGCDPDNKNAISTLLKIKNRSWKKGLILVAANYTQLLKYIDDSCLNETQRSRVFSTWPGPMTWVFPAQANRSYWLTGQFSSVAVRVSHFEPIQRLCLAFGKPLVSTSANLSGQLPARTIEEVHDQLGYKIPIMHEDILGRPNPSKIRDVMTGKLIRE.

The YrdC-like domain maps to 12-194; the sequence is SPNMKDLLIQ…DVMTGKLIRE (183 aa).

Belongs to the SUA5 family. TsaC subfamily.

It localises to the cytoplasm. It carries out the reaction L-threonine + hydrogencarbonate + ATP = L-threonylcarbamoyladenylate + diphosphate + H2O. Its function is as follows. Required for the formation of a threonylcarbamoyl group on adenosine at position 37 (t(6)A37) in tRNAs that read codons beginning with adenine. Catalyzes the conversion of L-threonine, HCO(3)(-)/CO(2) and ATP to give threonylcarbamoyl-AMP (TC-AMP) as the acyladenylate intermediate, with the release of diphosphate. The sequence is that of Threonylcarbamoyl-AMP synthase from Blochmanniella pennsylvanica (strain BPEN).